Consider the following 63-residue polypeptide: Prokaryotic ubiquitin-like protein Pup (63 aa).

Positions 1-28 (MSDRQTQIPAGGGREDDHDDQVQSAGQV) are disordered. Positions 19 to 57 (DDQVQSAGQVQVNTEGVDDLLDEIDGLLENNAEEFVRSY) are ARC ATPase binding. Glutamate 63 is covalently cross-linked (Isoglutamyl lysine isopeptide (Glu-Lys) (interchain with K-? in acceptor proteins)).

This sequence belongs to the prokaryotic ubiquitin-like protein family. Strongly interacts with the proteasome-associated ATPase ARC through a hydrophobic interface; the interacting region of Pup lies in its C-terminal half. There is one Pup binding site per ARC hexamer ring.

The protein operates within protein degradation; proteasomal Pup-dependent pathway. Its function is as follows. Protein modifier that is covalently attached to lysine residues of substrate proteins, thereby targeting them for proteasomal degradation. The tagging system is termed pupylation. The chain is Prokaryotic ubiquitin-like protein Pup from Corynebacterium efficiens (strain DSM 44549 / YS-314 / AJ 12310 / JCM 11189 / NBRC 100395).